We begin with the raw amino-acid sequence, 150 residues long: Large ribosomal subunit protein bL9 (150 aa).

It belongs to the bacterial ribosomal protein bL9 family.

In terms of biological role, binds to the 23S rRNA. In Mycoplasma genitalium (strain ATCC 33530 / DSM 19775 / NCTC 10195 / G37) (Mycoplasmoides genitalium), this protein is Large ribosomal subunit protein bL9.